Here is a 110-residue protein sequence, read N- to C-terminus: Small ribosomal subunit protein bS16 (110 aa).

Basic and acidic residues predominate over residues 81–104 (VRPAEVLGKQKQEKERSAKKKDAA). Positions 81–110 (VRPAEVLGKQKQEKERSAKKKDAAASETSE) are disordered.

Belongs to the bacterial ribosomal protein bS16 family.

This Prochlorococcus marinus (strain NATL2A) protein is Small ribosomal subunit protein bS16.